The following is a 428-amino-acid chain: Cytochrome P450-terp (428 aa).

Residue cysteine 377 participates in heme binding.

It belongs to the cytochrome P450 family. Heme serves as cofactor.

The protein localises to the cytoplasm. In terms of biological role, catalyzes the hydroxylation of alpha-terpineol. The polypeptide is Cytochrome P450-terp (cyp108) (Pseudomonas sp).